The following is a 223-amino-acid chain: Cytidylate kinase (223 aa).

Position 12-20 (12-20 (GPSGVGKGT)) interacts with ATP.

The protein belongs to the cytidylate kinase family. Type 1 subfamily.

It is found in the cytoplasm. It carries out the reaction CMP + ATP = CDP + ADP. The catalysed reaction is dCMP + ATP = dCDP + ADP. This Xylella fastidiosa (strain M12) protein is Cytidylate kinase.